A 40-amino-acid polypeptide reads, in one-letter code: Dermonecrotic toxin LgSicTox-alphaI-1 (40 aa).

2 residues coordinate Mg(2+): glutamate 32 and aspartate 34.

The protein belongs to the arthropod phospholipase D family. Class II subfamily. Requires Mg(2+) as cofactor. In terms of processing, contains 2 disulfide bonds. Expressed by the venom gland.

It is found in the secreted. The catalysed reaction is an N-(acyl)-sphingosylphosphocholine = an N-(acyl)-sphingosyl-1,3-cyclic phosphate + choline. It carries out the reaction an N-(acyl)-sphingosylphosphoethanolamine = an N-(acyl)-sphingosyl-1,3-cyclic phosphate + ethanolamine. The enzyme catalyses a 1-acyl-sn-glycero-3-phosphocholine = a 1-acyl-sn-glycero-2,3-cyclic phosphate + choline. It catalyses the reaction a 1-acyl-sn-glycero-3-phosphoethanolamine = a 1-acyl-sn-glycero-2,3-cyclic phosphate + ethanolamine. Its function is as follows. Dermonecrotic toxins cleave the phosphodiester linkage between the phosphate and headgroup of certain phospholipids (sphingolipid and lysolipid substrates), forming an alcohol (often choline) and a cyclic phosphate. This toxin acts on sphingomyelin (SM). It may also act on ceramide phosphoethanolamine (CPE), lysophosphatidylcholine (LPC) and lysophosphatidylethanolamine (LPE), but not on lysophosphatidylserine (LPS), and lysophosphatidylglycerol (LPG). It acts by transphosphatidylation, releasing exclusively cyclic phosphate products as second products. In vivo, intradermal injection induces dermonecrosis. Induces, hemolysis, vascular permeability, edema, inflammatory response, and platelet aggregation. The sequence is that of Dermonecrotic toxin LgSicTox-alphaI-1 from Loxosceles gaucho (Spider).